Consider the following 139-residue polypeptide: Nucleoside diphosphate kinase (139 aa).

Residues lysine 11, phenylalanine 59, arginine 87, threonine 93, arginine 104, and asparagine 114 each contribute to the ATP site. Histidine 117 functions as the Pros-phosphohistidine intermediate in the catalytic mechanism.

It belongs to the NDK family. As to quaternary structure, homotetramer. Mg(2+) serves as cofactor.

The protein localises to the cytoplasm. The catalysed reaction is a 2'-deoxyribonucleoside 5'-diphosphate + ATP = a 2'-deoxyribonucleoside 5'-triphosphate + ADP. It catalyses the reaction a ribonucleoside 5'-diphosphate + ATP = a ribonucleoside 5'-triphosphate + ADP. Its function is as follows. Major role in the synthesis of nucleoside triphosphates other than ATP. The ATP gamma phosphate is transferred to the NDP beta phosphate via a ping-pong mechanism, using a phosphorylated active-site intermediate. The polypeptide is Nucleoside diphosphate kinase (Moorella thermoacetica (strain ATCC 39073 / JCM 9320)).